The chain runs to 256 residues: MIIFPAIDIKDGVCVRLMQGDPDRVTVYGKDPVSVAKRWEGEGAGWLHVVDLDGAFLRRPANRQVVASIVKAVSIPVQVGGGIRNLEAIRDYLDSGVERAIIGTAALRQPEILEQACGLYRSRIALGIDARDGLVAIEGWKETSGTDAVALAKRFEKLDLAAIIYTDIHRDGMQSGVNIEATKRLLESCSIPVIASGGVHTLQDIEDLLPLVPLGLLGVITGKAIYSGTLRFKDALARVREKCGGATPSPNPRRGE.

Aspartate 8 (proton acceptor) is an active-site residue. Aspartate 129 (proton donor) is an active-site residue.

The protein belongs to the HisA/HisF family.

It is found in the cytoplasm. The catalysed reaction is 1-(5-phospho-beta-D-ribosyl)-5-[(5-phospho-beta-D-ribosylamino)methylideneamino]imidazole-4-carboxamide = 5-[(5-phospho-1-deoxy-D-ribulos-1-ylimino)methylamino]-1-(5-phospho-beta-D-ribosyl)imidazole-4-carboxamide. Its pathway is amino-acid biosynthesis; L-histidine biosynthesis; L-histidine from 5-phospho-alpha-D-ribose 1-diphosphate: step 4/9. The chain is 1-(5-phosphoribosyl)-5-[(5-phosphoribosylamino)methylideneamino] imidazole-4-carboxamide isomerase from Syntrophobacter fumaroxidans (strain DSM 10017 / MPOB).